The primary structure comprises 1574 residues: Synaptojanin-1 (1574 aa).

Positions Val119–Gly442 constitute an SAC domain. A catalytic region spans residues Gly500–Ser899. A phosphoserine mark is found at Ser820 and Ser830. The region spanning Gly894 to Pro971 is the RRM domain. Low complexity predominate over residues His1029–Pro1054. The disordered stretch occupies residues His1029 to Ser1327. A Phosphoserine modification is found at Ser1053. Residues Pro1090–Ile1100 are compositionally biased toward polar residues. A compositionally biased stretch (pro residues) spans Pro1105–Ser1127. Ser1147 and Ser1175 each carry phosphoserine. An Omega-N-methylarginine modification is found at Arg1198. At Thr1217 the chain carries Phosphothreonine. Positions Ser1287 to Gln1310 are enriched in low complexity. Phosphoserine occurs at positions 1289 and 1350. Residue Thr1354 is modified to Phosphothreonine. Disordered stretches follow at residues Thr1382 to Asp1519 and Leu1532 to Arg1574. Polar residues predominate over residues Gln1389–Thr1413. Tandem repeats lie at residues Asn1401–Phe1403, Asn1410–Phe1412, and Asn1421–Phe1423. Residues Asn1401–Phe1423 form a 3 X 3 AA repeats of N-P-F region. Polar residues-rich tracts occupy residues Arg1424 to Leu1436 and Asp1472 to Pro1484. Over residues Arg1535 to Pro1548 the composition is skewed to pro residues. Residues Pro1549 to Ser1563 are compositionally biased toward low complexity. Residue Ser1566 is modified to Phosphoserine.

Belongs to the synaptojanin family. It in the central section; belongs to the inositol 1,4,5-trisphosphate 5-phosphatase family. As to quaternary structure, interacts with ASH/GRB2. Interacts with PACSIN1, PACSIN2 and PACSIN3. Interacts with AMPH, SH3GL1, SH3GL2 and SH3GL3. Interacts with MYO1E (via SH3 domain). Interacts with BIN1 and DNM1. Interacts with EPS15. In terms of tissue distribution, found in neonatal brain, and in a wide variety of adult non-neuronal tissues. Concentrated at clathrin-coated endocytic intermediates in nerve terminals. Also detected in the lung and heart. Expressed at higher levels than isoform 2 in the testis and liver and is not detected in the skeletal muscle. Expressed predominantly in the neurons, but is also found in all other tissues at much lower levels. Also detected in the lung and heart. Epressed at lower levels than isoform 1 in the testis and liver and is not detected in the skeletal muscle. As to expression, expressed in the brain.

The protein localises to the membrane. The protein resides in the cytoplasm. It localises to the perinuclear region. The enzyme catalyses a 1,2-diacyl-sn-glycero-3-phospho-(1D-myo-inositol-4,5-bisphosphate) + H2O = a 1,2-diacyl-sn-glycero-3-phospho-(1D-myo-inositol 4-phosphate) + phosphate. Functionally, phosphatase that acts on various phosphoinositides, including phosphatidylinositol 4-phosphate, phosphatidylinositol (4,5)-bisphosphate and phosphatidylinositol (3,4,5)-trisphosphate. Has a role in clathrin-mediated endocytosis. Hydrolyzes PIP2 bound to actin regulatory proteins resulting in the rearrangement of actin filaments downstream of tyrosine kinase and ASH/GRB2. The protein is Synaptojanin-1 (Synj1) of Rattus norvegicus (Rat).